The chain runs to 943 residues: 2-oxoglutarate dehydrogenase E1 component (943 aa).

It belongs to the alpha-ketoglutarate dehydrogenase family. As to quaternary structure, homodimer. Part of the 2-oxoglutarate dehydrogenase (OGDH) complex composed of E1 (2-oxoglutarate dehydrogenase), E2 (dihydrolipoamide succinyltransferase) and E3 (dihydrolipoamide dehydrogenase); the complex contains multiple copies of the three enzymatic components (E1, E2 and E3). The cofactor is thiamine diphosphate.

It carries out the reaction N(6)-[(R)-lipoyl]-L-lysyl-[protein] + 2-oxoglutarate + H(+) = N(6)-[(R)-S(8)-succinyldihydrolipoyl]-L-lysyl-[protein] + CO2. E1 component of the 2-oxoglutarate dehydrogenase (OGDH) complex which catalyzes the decarboxylation of 2-oxoglutarate, the first step in the conversion of 2-oxoglutarate to succinyl-CoA and CO(2). This chain is 2-oxoglutarate dehydrogenase E1 component, found in Shouchella clausii (strain KSM-K16) (Alkalihalobacillus clausii).